The chain runs to 692 residues: Methionine--tRNA ligase (692 aa).

Residues 26–36 (PYANGSIHLGH) carry the 'HIGH' region motif. 4 residues coordinate Zn(2+): Cys157, Cys160, Cys170, and Cys173. The 'KMSKS' region signature appears at 342–346 (KMSKS). Lys345 serves as a coordination point for ATP. Positions 590–692 (DFAKVDLRIA…SGAQPGMRVK (103 aa)) constitute a tRNA-binding domain.

This sequence belongs to the class-I aminoacyl-tRNA synthetase family. MetG type 1 subfamily. In terms of assembly, homodimer. Requires Zn(2+) as cofactor.

The protein localises to the cytoplasm. The enzyme catalyses tRNA(Met) + L-methionine + ATP = L-methionyl-tRNA(Met) + AMP + diphosphate. Is required not only for elongation of protein synthesis but also for the initiation of all mRNA translation through initiator tRNA(fMet) aminoacylation. The chain is Methionine--tRNA ligase from Methylobacillus flagellatus (strain ATCC 51484 / DSM 6875 / VKM B-1610 / KT).